We begin with the raw amino-acid sequence, 106 residues long: Non-histone chromosomal protein 6 (106 aa).

Positions 1–11 are enriched in basic residues; the sequence is MPKANPTRKTK. Disordered regions lie at residues 1 to 33 and 60 to 106; these read MPKA…GLSA and MLGE…EESS. Composition is skewed to basic and acidic residues over residues 12-26 and 61-93; these read ATRE…DPNA and LGEK…EKAA. The segment at residues 27–95 is a DNA-binding region (HMG box); that stretch reads PKRGLSAYMF…RYEDEKAAYK (69 aa).

Belongs to the NHP6 family. As to quaternary structure, weakly associates with the stable spt16-pob3 heterodimer to form the FACT complex.

The protein localises to the nucleus. Its subcellular location is the chromosome. DNA-binding protein that induces severe bending of DNA. Required for DNA-binding by the FACT complex, a general chromatin factor that acts to reorganize nucleosomes. The FACT complex is involved in multiple processes that require DNA as a template such as mRNA elongation, DNA replication and DNA repair. Also augments the fidelity of transcription by RNA polymerase III independently of any role in the FACT complex. This is Non-histone chromosomal protein 6 (nhp6) from Emericella nidulans (strain FGSC A4 / ATCC 38163 / CBS 112.46 / NRRL 194 / M139) (Aspergillus nidulans).